The primary structure comprises 283 residues: Polyamine aminopropyltransferase (283 aa).

In terms of domain architecture, PABS spans 5–238 (TTWIDEYHKG…GIWSWTFASS (234 aa)). Residue Gln-32 participates in S-methyl-5'-thioadenosine binding. His-63 and Asp-87 together coordinate spermidine. Residues Glu-107 and 139–140 (DG) contribute to the S-methyl-5'-thioadenosine site. Asp-158 serves as the catalytic Proton acceptor. 158-161 (DSSD) provides a ligand contact to spermidine.

Belongs to the spermidine/spermine synthase family. In terms of assembly, homodimer or homotetramer.

The protein localises to the cytoplasm. It catalyses the reaction S-adenosyl 3-(methylsulfanyl)propylamine + putrescine = S-methyl-5'-thioadenosine + spermidine + H(+). Its pathway is amine and polyamine biosynthesis; spermidine biosynthesis; spermidine from putrescine: step 1/1. Functionally, catalyzes the irreversible transfer of a propylamine group from the amino donor S-adenosylmethioninamine (decarboxy-AdoMet) to putrescine (1,4-diaminobutane) to yield spermidine. In Prochlorococcus marinus (strain MIT 9215), this protein is Polyamine aminopropyltransferase.